The sequence spans 162 residues: Transcription elongation factor GreA (162 aa).

The stretch at 44–72 (ENAEYHAAKEKQSHIERRIAELSDILSRA) forms a coiled coil.

This sequence belongs to the GreA/GreB family.

Its function is as follows. Necessary for efficient RNA polymerase transcription elongation past template-encoded arresting sites. The arresting sites in DNA have the property of trapping a certain fraction of elongating RNA polymerases that pass through, resulting in locked ternary complexes. Cleavage of the nascent transcript by cleavage factors such as GreA or GreB allows the resumption of elongation from the new 3'terminus. GreA releases sequences of 2 to 3 nucleotides. The protein is Transcription elongation factor GreA of Nautilia profundicola (strain ATCC BAA-1463 / DSM 18972 / AmH).